Here is a 299-residue protein sequence, read N- to C-terminus: Mycothiol acetyltransferase (299 aa).

N-acetyltransferase domains follow at residues 1–156 (MGWT…TYRG) and 149–299 (VTMR…ARAL). E33 contributes to the 1D-myo-inositol 2-(L-cysteinylamino)-2-deoxy-alpha-D-glucopyranoside binding site. Residues 75-77 (LVV) and 83-88 (RRGIGT) each bind acetyl-CoA. 1D-myo-inositol 2-(L-cysteinylamino)-2-deoxy-alpha-D-glucopyranoside-binding residues include E176, K218, and E231. Residues 235-237 (VGI) and 242-248 (QGRGLGR) contribute to the acetyl-CoA site. Y269 contacts 1D-myo-inositol 2-(L-cysteinylamino)-2-deoxy-alpha-D-glucopyranoside. 274-279 (NTAALH) lines the acetyl-CoA pocket.

Belongs to the acetyltransferase family. MshD subfamily. As to quaternary structure, monomer.

It catalyses the reaction 1D-myo-inositol 2-(L-cysteinylamino)-2-deoxy-alpha-D-glucopyranoside + acetyl-CoA = mycothiol + CoA + H(+). In terms of biological role, catalyzes the transfer of acetyl from acetyl-CoA to desacetylmycothiol (Cys-GlcN-Ins) to form mycothiol. This chain is Mycothiol acetyltransferase, found in Rhodococcus erythropolis (strain PR4 / NBRC 100887).